A 571-amino-acid polypeptide reads, in one-letter code: External alternative NAD(P)H-ubiquinone oxidoreductase B1, mitochondrial (571 aa).

Residues 1 to 35 constitute a mitochondrion transit peptide; it reads MTLLSSLGRASRSAPLASKLLLLGTLSGGSIVAYA. 51 to 81 is an FAD binding site; that stretch reads KVVVLGTGWAGISFLKDLDITSYDVQVVSPQ. 215 to 251 is a binding site for NAD(+); the sequence is LHFVIVGGGPTGVEFAAELHDFIIEDITKIYPSVKEL. The EF-hand domain occupies 372 to 407; the sequence is KILGDIANIFKAADADNSGTLTMEELEGVVDDIIVR. Ca(2+) contacts are provided by Asp-385, Asp-387, Ser-389, Thr-391, and Glu-396. A Microbody targeting signal motif is present at residues 562 to 571; that stretch reads YIFGRDSSRI.

The protein belongs to the NADH dehydrogenase family. It depends on FAD as a cofactor. Expressed in seedlings, roots, cotyledons, leaves, stems, buds and flowers.

It localises to the mitochondrion inner membrane. Its subcellular location is the peroxisome. The enzyme catalyses a quinone + NADH + H(+) = a quinol + NAD(+). It catalyses the reaction a ubiquinone + NADH + H(+) = a ubiquinol + NAD(+). Its activity is regulated as follows. Activity is calcium-dependent with a more pronounced effect at higher pH. In terms of biological role, alternative NADH-ubiquinone oxidoreductase which catalyzes the oxidation of mitochondrial NADH does not translocate protons across the inner mitochondrial membrane. Calcium-dependent NAD(P)H dehydrogenase. Binds calcium ions. In Arabidopsis thaliana (Mouse-ear cress), this protein is External alternative NAD(P)H-ubiquinone oxidoreductase B1, mitochondrial (NDB1).